The chain runs to 1164 residues: DNA-directed RNA polymerase 132 kDa polypeptide (1164 aa).

This sequence belongs to the RNA polymerase beta chain family. In terms of assembly, the DNA-dependent RNA polymerase used for intermediate and late genes expression consists of eight subunits (147) kDa, (133) kDa, (35) kDa, (30) kDa, (22) kDa, (19) kDa, (18) kDa and (7) kDa totalling more than 500 kDa in mass. The same holoenzyme, with the addition of the transcription-specificity factor RAP94, is used for early gene expression.

It localises to the virion. The enzyme catalyses RNA(n) + a ribonucleoside 5'-triphosphate = RNA(n+1) + diphosphate. In terms of biological role, part of the DNA-dependent RNA polymerase which catalyzes the transcription of viral DNA into RNA using the four ribonucleoside triphosphates as substrates. Responsible for the transcription of early, intermediate and late genes. DNA-dependent RNA polymerase associates with the early transcription factor (ETF), itself composed of D6 and A7, thereby allowing the early genes transcription. Late transcription, and probably also intermediate transcription, require newly synthesized RNA polymerase. This is DNA-directed RNA polymerase 132 kDa polypeptide (RPO132) from Mus musculus (Mouse).